A 224-amino-acid chain; its full sequence is Ribosomal RNA small subunit methyltransferase G (224 aa).

S-adenosyl-L-methionine-binding positions include Gly89, Phe94, 140-141, and Arg153; that span reads AE.

Belongs to the methyltransferase superfamily. RNA methyltransferase RsmG family.

The protein resides in the cytoplasm. Functionally, specifically methylates the N7 position of a guanine in 16S rRNA. The protein is Ribosomal RNA small subunit methyltransferase G of Bacteroides fragilis (strain YCH46).